The chain runs to 1028 residues: Unconventional myosin-Ic (1028 aa).

Met-1 is subject to N-acetylmethionine. The region spanning 12 to 696 (GVQDFVLLEN…TLFATEDALE (685 aa)) is the Myosin motor domain. ATP contacts are provided by residues Asn-53, Tyr-61, 104 to 113 (SGESGAGKTE), and 157 to 161 (NDNSS). At Lys-348 the chain carries N6-methyllysine. An actin-binding region spans residues 573–595 (LSKLMEILMSKEPSYIRCIKPND). 2 consecutive IQ domains span residues 699–728 (KQSL…SAIA) and 722–751 (MKHS…AVQT). Residues 850–1024 (KDNYPQSVPR…NGHLTVVAPR (175 aa)) form the TH1 domain.

It belongs to the TRAFAC class myosin-kinesin ATPase superfamily. Myosin family. As to quaternary structure, interacts (via its IQ motifs) with CALM.

It localises to the cytoplasm. The protein resides in the cell cortex. It is found in the cell projection. Its subcellular location is the ruffle membrane. The protein localises to the cytoplasmic vesicle. It localises to the stereocilium membrane. Its function is as follows. Myosins are actin-based motor molecules with ATPase activity. Unconventional myosins serve in intracellular movements. Their highly divergent tails are presumed to bind to membranous compartments, which would be moved relative to actin filaments. This Gallus gallus (Chicken) protein is Unconventional myosin-Ic (MYO1C).